Here is a 1059-residue protein sequence, read N- to C-terminus: Transmembrane protease serine 9 (1059 aa).

Over 1–29 the chain is Cytoplasmic; that stretch reads MEPTVADVHLVPRTTKEVPALDAACCRAA. Residues 30–50 traverse the membrane as a helical; Signal-anchor for type II membrane protein segment; sequence SIGVVATSLVVLTLGVLLAFL. Topologically, residues 51 to 1059 are extracellular; it reads STQGFHVDHT…RGWIGQHIQE (1009 aa). In terms of domain architecture, LDL-receptor class A spans 153 to 190; that stretch reads RCPGNSFSCGNSQCVTKVNPECDDQEDCSDGSDEAHCE. Disulfide bonds link C154-C166, C161-C180, C174-C189, and C228-C244. The region spanning 203–436 is the Peptidase S1 1 domain; it reads IVGGMEASPG…LRDWILEATT (234 aa). Residues H243 and D292 each act as charge relay system in the active site. Intrachain disulfides connect C326–C393, C358–C372, and C383–C412. The active-site Charge relay system is S387. A disordered region spans residues 443–469; the sequence is APTMAPAPAAPSTAWPTSPESPVVSTP. One can recognise a Peptidase S1 2 domain in the interval 504 to 736; that stretch reads VVGGFGAASG…LKGWILEIMS (233 aa). C529 and C545 form a disulfide bridge. Residue H544 is the Charge relay system of the active site. The N-linked (GlcNAc...) asparagine glycan is linked to N547. The active-site Charge relay system is D592. 3 disulfides stabilise this stretch: C626-C693, C658-C672, and C683-C712. N638 and N663 each carry an N-linked (GlcNAc...) asparagine glycan. S687 acts as the Charge relay system in catalysis. Residues 758-814 form a disordered region; the sequence is TTAGLTVPGATPSRPTPGAASRVTGQPANSTLSAVSTTARGQTPFPDAPEATTHTQL. The segment covering 780-798 has biased composition (polar residues); it reads VTGQPANSTLSAVSTTARG. N786 carries N-linked (GlcNAc...) asparagine glycosylation. In terms of domain architecture, Peptidase S1 3 spans 827–1058; that stretch reads IVGGSAAGRG…VRGWIGQHIQ (232 aa). Cystine bridges form between C853-C869, C949-C1015, C980-C994, and C1005-C1034.

The protein belongs to the peptidase S1 family. Post-translationally, proteolytically cleaved to generate 3 independent serine protease chains. The cleaved chains may remain attached to the membrane thanks to disulfide bonds. It is unclear whether cleavage always takes place. In terms of tissue distribution, expressed in fetal human tissues, such as kidney, liver, lung and brain, and in a variety of tumor cell lines. Weakly expressed in adult tissues including skeletal muscle, liver, placenta and heart.

The protein localises to the cell membrane. Its activity is regulated as follows. Inhibited by serine protease inhibitors PMSF and 4-(2-aminoethyl)benzenesulfonyl fluoride, but not by EDTA. Functionally, serase-1 and serase-2 are serine proteases that hydrolyze the peptides N-t-Boc-Gln-Ala-Arg-AMC and N-t-Boc-Gln-Gly-Arg-AMC. In contrast, N-t-Boc-Ala-Phe-Lys-AMC and N-t-Boc-Ala-Pro-Ala-AMC are not significantly hydrolyzed. This chain is Transmembrane protease serine 9 (TMPRSS9), found in Homo sapiens (Human).